A 54-amino-acid polypeptide reads, in one-letter code: LPSQHLCGSHLVEALYFVCGPKGFYYLPKBZVGIVEHCCHNTCSLYDLEGYCNQ.

Cystine bridges form between cysteine 7-cysteine 39, cysteine 19-cysteine 52, and cysteine 38-cysteine 43.

The protein belongs to the insulin family. Heterodimer of a B chain and an A chain linked by two disulfide bonds.

It localises to the secreted. Insulin decreases blood glucose concentration. It increases cell permeability to monosaccharides, amino acids and fatty acids. It accelerates glycolysis, the pentose phosphate cycle, and glycogen synthesis in liver. In Squalus acanthias (Spiny dogfish), this protein is Insulin (ins).